Reading from the N-terminus, the 87-residue chain is Small ribosomal subunit protein uS15c (87 aa).

The protein belongs to the universal ribosomal protein uS15 family. Part of the 30S ribosomal subunit.

Its subcellular location is the plastid. It localises to the chloroplast. The sequence is that of Small ribosomal subunit protein uS15c (rps15) from Oenothera glazioviana (Large-flowered evening primrose).